A 433-amino-acid chain; its full sequence is MTDILNYTKSEEIFSAAQQLMPGGVSSPVRAFKSVGGQPIVFDRVKGPFAWDIDGNRYIDYIGSWGPAICGHAHPEVTTALQEAIEKGTSFGAPCVLENKLAEMVIDAVPSVEMVRFVNSGTEACMAVLRLMRAFTGRDKVIKFDGCYHGHADMFLVKAGSGVATLGLPDSPGVPRTTTANTLTAPYNDLEAVKKLFSENPDAISGVILEPIVGNAGFITPEPGFLEGLRELTTENGSLLVFDEVMTGFRISYGGAQEKFGVTPDLTTLGKVIGGGLPVGAYGGKKEIMSMVAPSGPVYQAGTLSGNPLAMTAGIKTLELLKQDGTYDKLDLITSRLIEGIIQSAENNGIAINGGSVSAMFGFFLCDGPVRNFNEAKTNDAELFGKLHKEMLRRGIYLAPSPFEAGFTSLAHSEEEIDKTIEAFDESFNAIKK.

An N6-(pyridoxal phosphate)lysine modification is found at lysine 271.

The protein belongs to the class-III pyridoxal-phosphate-dependent aminotransferase family. HemL subfamily. Homodimer. Requires pyridoxal 5'-phosphate as cofactor.

The protein resides in the cytoplasm. It carries out the reaction (S)-4-amino-5-oxopentanoate = 5-aminolevulinate. It participates in porphyrin-containing compound metabolism; protoporphyrin-IX biosynthesis; 5-aminolevulinate from L-glutamyl-tRNA(Glu): step 2/2. The protein operates within porphyrin-containing compound metabolism; chlorophyll biosynthesis. The polypeptide is Glutamate-1-semialdehyde 2,1-aminomutase (Prochlorococcus marinus (strain AS9601)).